The sequence spans 137 residues: Small ribosomal subunit protein uS8 (137 aa).

The protein belongs to the universal ribosomal protein uS8 family. In terms of assembly, part of the 30S ribosomal subunit. Contacts proteins S5 and S12.

One of the primary rRNA binding proteins, it binds directly to 16S rRNA central domain where it helps coordinate assembly of the platform of the 30S subunit. The polypeptide is Small ribosomal subunit protein uS8 (Metamycoplasma arthritidis (strain 158L3-1) (Mycoplasma arthritidis)).